The primary structure comprises 139 residues: Translation initiation factor 5A (139 aa).

Lys36 carries the hypusine modification.

The protein belongs to the eIF-5A family.

It localises to the cytoplasm. Functionally, functions by promoting the formation of the first peptide bond. The sequence is that of Translation initiation factor 5A (eif5a) from Aeropyrum pernix (strain ATCC 700893 / DSM 11879 / JCM 9820 / NBRC 100138 / K1).